Reading from the N-terminus, the 260-residue chain is Proteasome assembly chaperone 2 (260 aa).

The protein belongs to the PSMG2 family. In terms of assembly, forms a heterodimer with psmg1. Degraded by the proteasome upon completion of 20S proteasome maturation.

It localises to the nucleus. Chaperone protein which promotes assembly of the 20S proteasome as part of a heterodimer with psmg1. The sequence is that of Proteasome assembly chaperone 2 from Danio rerio (Zebrafish).